We begin with the raw amino-acid sequence, 493 residues long: Beta-amyrin 11-oxidase (493 aa).

The chain crosses the membrane as a helical span at residues 7-23 (CMSAATLLVCYIFGSKF). Residue Cys439 participates in heme binding.

This sequence belongs to the cytochrome P450 family. Requires heme as cofactor. Expressed in roots and stolons. Not detected in leaves and stems.

It localises to the membrane. It catalyses the reaction beta-amyrin + 2 reduced [NADPH--hemoprotein reductase] + 2 O2 = 11-oxo-beta-amyrin + 2 oxidized [NADPH--hemoprotein reductase] + 3 H2O + 2 H(+). It carries out the reaction beta-amyrin + reduced [NADPH--hemoprotein reductase] + O2 = 11alpha-hydroxy-beta-amyrin + oxidized [NADPH--hemoprotein reductase] + H2O + H(+). The enzyme catalyses 11alpha-hydroxy-beta-amyrin + reduced [NADPH--hemoprotein reductase] + O2 = 11-oxo-beta-amyrin + oxidized [NADPH--hemoprotein reductase] + 2 H2O + H(+). Functionally, involved in the biosynthesis of Glycyrrhetinic acid (GA), a natural product which exhibits anti-inflammatory activity. Catalyzes 2 successive oxidations of beta-amyrin, producing a precursor of the triterpene sweetener glycyrrhizin. Unable to use 11-deoxoglycyrrhetinic acid or ent-kaurenoic acid as substrates. This is Beta-amyrin 11-oxidase from Glycyrrhiza uralensis (Chinese licorice).